The primary structure comprises 444 residues: ATPase PAAT (444 aa).

Ser-177, Ser-182, and Ser-254 each carry phosphoserine. The disordered stretch occupies residues 279–300; that stretch reads SAQPSGEGNTTNHDEGHLMPQN. Positions 280–289 are enriched in polar residues; sequence AQPSGEGNTT. Ser-302 carries the post-translational modification Phosphoserine. The interval 424–444 is disordered; it reads PPPGMPLRHYDSRERLSNGER. The span at 431–444 shows a compositional bias: basic and acidic residues; sequence RHYDSRERLSNGER.

In terms of assembly, homodimer. Interacts with ABCB7, ABCB8/MITOSUR and ABCB10.

The protein resides in the cytoplasm. The protein localises to the mitochondrion. The catalysed reaction is ATP + H2O = ADP + phosphate + H(+). Its function is as follows. ATPase that regulates mitochondrial ABC transporters ABCB7, ABCB8/MITOSUR and ABCB10. Regulates mitochondrial ferric concentration and heme biosynthesis and plays a role in the maintenance of mitochondrial homeostasis and cell survival. In Mus musculus (Mouse), this protein is ATPase PAAT.